Reading from the N-terminus, the 392-residue chain is GTPase Obg (392 aa).

In terms of domain architecture, Obg spans 1–159; sequence MKFVDEATIL…RDLQLELMLL (159 aa). The disordered stretch occupies residues 127-146; the sequence is NTRFKSSVNRTPRQKTMGTP. Residues 129–143 are compositionally biased toward polar residues; sequence RFKSSVNRTPRQKTM. In terms of domain architecture, OBG-type G spans 160–333; the sequence is ADVGMLGLPN…LCWDVMAFIK (174 aa). GTP-binding positions include 166 to 173, 191 to 195, 213 to 216, 283 to 286, and 314 to 316; these read GLPNAGKS, FTTLV, DIPG, NKVD, and SAA. Mg(2+)-binding residues include Ser173 and Thr193. Residues 360-392 are disordered; that stretch reads QLEEAQPEVEEDDDWDDDWDEDDEEGVETIYQR. Over residues 364–386 the composition is skewed to acidic residues; that stretch reads AQPEVEEDDDWDDDWDEDDEEGV.

The protein belongs to the TRAFAC class OBG-HflX-like GTPase superfamily. OBG GTPase family. Monomer. Mg(2+) serves as cofactor.

The protein resides in the cytoplasm. An essential GTPase which binds GTP, GDP and possibly (p)ppGpp with moderate affinity, with high nucleotide exchange rates and a fairly low GTP hydrolysis rate. Plays a role in control of the cell cycle, stress response, ribosome biogenesis and in those bacteria that undergo differentiation, in morphogenesis control. In Erwinia tasmaniensis (strain DSM 17950 / CFBP 7177 / CIP 109463 / NCPPB 4357 / Et1/99), this protein is GTPase Obg.